Here is a 468-residue protein sequence, read N- to C-terminus: ATP synthase subunit beta (468 aa).

155–162 (GGAGVGKT) serves as a coordination point for ATP.

It belongs to the ATPase alpha/beta chains family. F-type ATPases have 2 components, CF(1) - the catalytic core - and CF(0) - the membrane proton channel. CF(1) has five subunits: alpha(3), beta(3), gamma(1), delta(1), epsilon(1). CF(0) has three main subunits: a(1), b(2) and c(9-12). The alpha and beta chains form an alternating ring which encloses part of the gamma chain. CF(1) is attached to CF(0) by a central stalk formed by the gamma and epsilon chains, while a peripheral stalk is formed by the delta and b chains.

The protein localises to the cell membrane. The enzyme catalyses ATP + H2O + 4 H(+)(in) = ADP + phosphate + 5 H(+)(out). Its function is as follows. Produces ATP from ADP in the presence of a proton gradient across the membrane. The catalytic sites are hosted primarily by the beta subunits. The chain is ATP synthase subunit beta from Streptococcus pneumoniae serotype 19F (strain G54).